The primary structure comprises 603 residues: DNA mismatch repair protein MutL (603 aa).

The protein belongs to the DNA mismatch repair MutL/HexB family.

In terms of biological role, this protein is involved in the repair of mismatches in DNA. It is required for dam-dependent methyl-directed DNA mismatch repair. May act as a 'molecular matchmaker', a protein that promotes the formation of a stable complex between two or more DNA-binding proteins in an ATP-dependent manner without itself being part of a final effector complex. The polypeptide is DNA mismatch repair protein MutL (Nitrobacter hamburgensis (strain DSM 10229 / NCIMB 13809 / X14)).